A 303-amino-acid chain; its full sequence is MARKRKGRDISGWLVVDKPAGMTSTAVVNKVRWALGANKAGHAGTLDPEATGVLAIALGEATKTVPYITDALKAYVFTVRLGQATNTDDAEGEVIASSDLRPTDEQIKDALAPFLGDIMQVPPKFSAVKIDGQRAYKLARDGEDVELAARPLWVEELLMLDRPDPDHVLLEMTCGKGGYVRSIARDLGAALGCYGHVRELRRIWSGPFEAEDGITLEQVEALAKTPELDSYLRPLEEGLADLPELKCSPEGAQRLRNGNPGMVYPGEAEYGDEAWASFEGRAVAVGIYKSGELHPARVFARPE.

Residue aspartate 47 is the Nucleophile of the active site.

Belongs to the pseudouridine synthase TruB family. Type 1 subfamily.

It carries out the reaction uridine(55) in tRNA = pseudouridine(55) in tRNA. Responsible for synthesis of pseudouridine from uracil-55 in the psi GC loop of transfer RNAs. This chain is tRNA pseudouridine synthase B, found in Ruegeria pomeroyi (strain ATCC 700808 / DSM 15171 / DSS-3) (Silicibacter pomeroyi).